Consider the following 131-residue polypeptide: uncharacterized protein (131 aa).

The next 2 helical transmembrane spans lie at 61–81 (LLLL…YLPI) and 102–122 (VCSI…ALRY).

Its subcellular location is the membrane. This is an uncharacterized protein from Saccharomyces cerevisiae (strain ATCC 204508 / S288c) (Baker's yeast).